A 288-amino-acid chain; its full sequence is ATP phosphoribosyltransferase (288 aa).

It belongs to the ATP phosphoribosyltransferase family. Long subfamily. It depends on Mg(2+) as a cofactor.

It localises to the cytoplasm. The catalysed reaction is 1-(5-phospho-beta-D-ribosyl)-ATP + diphosphate = 5-phospho-alpha-D-ribose 1-diphosphate + ATP. The protein operates within amino-acid biosynthesis; L-histidine biosynthesis; L-histidine from 5-phospho-alpha-D-ribose 1-diphosphate: step 1/9. Feedback inhibited by histidine. Catalyzes the condensation of ATP and 5-phosphoribose 1-diphosphate to form N'-(5'-phosphoribosyl)-ATP (PR-ATP). Has a crucial role in the pathway because the rate of histidine biosynthesis seems to be controlled primarily by regulation of HisG enzymatic activity. The polypeptide is ATP phosphoribosyltransferase (Methanococcus maripaludis (strain DSM 14266 / JCM 13030 / NBRC 101832 / S2 / LL)).